A 540-amino-acid chain; its full sequence is Cytochrome P450 monooxygenase prx8 (540 aa).

The chain crosses the membrane as a helical span at residues 50–68 (ALGAAIALFACACAYALVA). The N-linked (GlcNAc...) asparagine glycan is linked to N460. C483 serves as a coordination point for heme.

It belongs to the cytochrome P450 family. Heme serves as cofactor.

The protein resides in the membrane. Its pathway is sesquiterpene biosynthesis. In terms of biological role, cytochrome P450 monooxygenase; part of the gene cluster that mediates the biosynthesis of PR-toxin, a bicyclic sesquiterpene belonging to the eremophilane class and acting as a mycotoxin. The first step of the pathway is catalyzed by the aristolochene synthase which performs the cyclization of trans,trans-farnesyl diphosphate (FPP) to the bicyclic sesquiterpene aristolochene. Following the formation of aristolochene, the non-oxygenated aristolochene is converted to the trioxygenated intermediate eremofortin B, via 7-epi-neopetasone. This conversion appears to involve three enzymes, a hydroxysterol oxidase-like enzyme, the quinone-oxidase prx3 that forms the quinone-type-structure in the bicyclic nucleus of aristolochene with the C8-oxo group and the C-3 hydroxyl group, and the P450 monooxygenase prx9 that introduces the epoxide at the double bond between carbons 1 and 2. No monoxy or dioxy-intermediates have been reported to be released to the broth, so these three early oxidative reactions may be coupled together. Eremofortin B is further oxidized by another P450 monooxygenase, that introduces a second epoxide between carbons 7 and 11 prior to acetylation to eremofortin A by the acetyltransferase prx11. The second epoxidation may be performed by a second P450 monooxygenase. After the acetylation step, eremofortin A is converted to eremofortin C and then to PR-toxin. First the conversion of eremofortin A to eremofortin C proceeds by oxidation of the side chain of the molecule at C-12 and is catalyzed by the short-chain oxidoreductase prx1. The cytochrome P450 monooxygenase prx8 also plays a role in this step. The primary alcohol formed at C-12 is finally oxidized by the short-chain alcohol dehydrogenase prx4 that forms PR-toxin. The sequence is that of Cytochrome P450 monooxygenase prx8 from Penicillium rubens (strain ATCC 28089 / DSM 1075 / NRRL 1951 / Wisconsin 54-1255) (Penicillium chrysogenum).